The sequence spans 483 residues: Iroquois-class homeodomain protein IRX-5 (483 aa).

The segment at residues 113–175 is a DNA-binding region (homeobox; TALE-type); it reads DPAYRKNATR…NARRRLKKEN (63 aa). Disordered stretches follow at residues 177–392 and 423–442; these read MTWT…QCPF and GHPG…FNGL. A compositionally biased stretch (acidic residues) spans 186-203; that stretch reads EDEEEEENIDLEKNDEDE. 2 stretches are compositionally biased toward basic and acidic residues: residues 204 to 213 and 250 to 261; these read PQKPEDKGDP and SDFKEPPSEGRL. Low complexity-rich tracts occupy residues 266–282 and 374–388; these read GPPR…AAAR and SRAS…SPSA. Serine 274 bears the Phosphoserine mark. A Phosphoserine modification is found at serine 464.

It belongs to the TALE/IRO homeobox family.

The protein localises to the nucleus. Functionally, establishes the cardiac repolarization gradient by its repressive actions on the KCND2 potassium-channel gene. Required for retinal cone bipolar cell differentiation. May regulate contrast adaptation in the retina and control specific aspects of visual function in circuits of the mammalian retina. Could be involved in the regulation of both the cell cycle and apoptosis in prostate cancer cells. Involved in craniofacial and gonadal development. Modulates the migration of progenitor cell populations in branchial arches and gonads by repressing CXCL12. This Homo sapiens (Human) protein is Iroquois-class homeodomain protein IRX-5 (IRX5).